Here is a 178-residue protein sequence, read N- to C-terminus: MEQFHGTTIVSVRRGDKVALGGDGQVTLGNIVMKGGAKKVRRIYNGKVMVGFAGGTADAFSLLDRFEAKLEKHQGNLTRAAVELAKDWRTDRMLRRLEAMLIAADATTTLVITGNGDVLDPEGGICAIGSGGAYAQAAAKALADNTELSPREIVEKSLEIAGDMCIYTNHNRVIETIE.

Residue T7 is part of the active site. Positions 162, 165, and 168 each coordinate Na(+).

It belongs to the peptidase T1B family. HslV subfamily. A double ring-shaped homohexamer of HslV is capped on each side by a ring-shaped HslU homohexamer. The assembly of the HslU/HslV complex is dependent on binding of ATP.

The protein localises to the cytoplasm. The enzyme catalyses ATP-dependent cleavage of peptide bonds with broad specificity.. Allosterically activated by HslU binding. Functionally, protease subunit of a proteasome-like degradation complex believed to be a general protein degrading machinery. The protein is ATP-dependent protease subunit HslV of Paraburkholderia xenovorans (strain LB400).